The primary structure comprises 314 residues: MDVIKISPRGYCYGVVDAMVIAKNASLDKTLPRPIYILGMIVHNKHVTDAFEEDGIYTLDGTNRLEILKQVEKGTVIFTAHGVSPEVRKAAEEKGLVTIDATCPDVTKTHDLIRKVKAEGYHVIYIGKKGHPEPEGAVGVAPEIVHLVETEEDVRNLDIQAEKLIVTNQTTMSQWDVHDIMESVKEKYPYVEYHQEICLATQVRQEAVSEQAKKADLTIVVGDPKSNNSNRLAQVSEEIAGTKAYRIGDISELKLEWLKDVNTVAVTAGASTPTPITKEVIRFLEQFDHNDESTWQLEHSVPLKKILPKVKIKN.

Cys12 contributes to the [4Fe-4S] cluster binding site. Residues His43 and His81 each contribute to the (2E)-4-hydroxy-3-methylbut-2-enyl diphosphate site. Residues His43 and His81 each contribute to the dimethylallyl diphosphate site. 2 residues coordinate isopentenyl diphosphate: His43 and His81. Position 103 (Cys103) interacts with [4Fe-4S] cluster. His131 serves as a coordination point for (2E)-4-hydroxy-3-methylbut-2-enyl diphosphate. His131 provides a ligand contact to dimethylallyl diphosphate. Position 131 (His131) interacts with isopentenyl diphosphate. The active-site Proton donor is the Glu133. Thr170 contributes to the (2E)-4-hydroxy-3-methylbut-2-enyl diphosphate binding site. Cys198 lines the [4Fe-4S] cluster pocket. (2E)-4-hydroxy-3-methylbut-2-enyl diphosphate is bound by residues Ser226, Asn228, and Ser271. Residues Ser226, Asn228, and Ser271 each coordinate dimethylallyl diphosphate. Residues Ser226, Asn228, and Ser271 each coordinate isopentenyl diphosphate.

Belongs to the IspH family. It depends on [4Fe-4S] cluster as a cofactor.

The catalysed reaction is isopentenyl diphosphate + 2 oxidized [2Fe-2S]-[ferredoxin] + H2O = (2E)-4-hydroxy-3-methylbut-2-enyl diphosphate + 2 reduced [2Fe-2S]-[ferredoxin] + 2 H(+). It carries out the reaction dimethylallyl diphosphate + 2 oxidized [2Fe-2S]-[ferredoxin] + H2O = (2E)-4-hydroxy-3-methylbut-2-enyl diphosphate + 2 reduced [2Fe-2S]-[ferredoxin] + 2 H(+). It participates in isoprenoid biosynthesis; dimethylallyl diphosphate biosynthesis; dimethylallyl diphosphate from (2E)-4-hydroxy-3-methylbutenyl diphosphate: step 1/1. The protein operates within isoprenoid biosynthesis; isopentenyl diphosphate biosynthesis via DXP pathway; isopentenyl diphosphate from 1-deoxy-D-xylulose 5-phosphate: step 6/6. Its function is as follows. Catalyzes the conversion of 1-hydroxy-2-methyl-2-(E)-butenyl 4-diphosphate (HMBPP) into a mixture of isopentenyl diphosphate (IPP) and dimethylallyl diphosphate (DMAPP). Acts in the terminal step of the DOXP/MEP pathway for isoprenoid precursor biosynthesis. The polypeptide is 4-hydroxy-3-methylbut-2-enyl diphosphate reductase (Bacillus velezensis (strain DSM 23117 / BGSC 10A6 / LMG 26770 / FZB42) (Bacillus amyloliquefaciens subsp. plantarum)).